A 235-amino-acid polypeptide reads, in one-letter code: 2-C-methyl-D-erythritol 4-phosphate cytidylyltransferase (235 aa).

Belongs to the IspD/TarI cytidylyltransferase family. IspD subfamily.

It catalyses the reaction 2-C-methyl-D-erythritol 4-phosphate + CTP + H(+) = 4-CDP-2-C-methyl-D-erythritol + diphosphate. It functions in the pathway isoprenoid biosynthesis; isopentenyl diphosphate biosynthesis via DXP pathway; isopentenyl diphosphate from 1-deoxy-D-xylulose 5-phosphate: step 2/6. Functionally, catalyzes the formation of 4-diphosphocytidyl-2-C-methyl-D-erythritol from CTP and 2-C-methyl-D-erythritol 4-phosphate (MEP). The chain is 2-C-methyl-D-erythritol 4-phosphate cytidylyltransferase from Pseudomonas putida (strain W619).